Consider the following 208-residue polypeptide: uncharacterized protein (208 aa).

4Fe-4S ferredoxin-type domains are found at residues 59–88, 114–145, 147–176, and 174–203; these read GVLV…SVGT, GDLN…WQQK, GCIT…VNTE, and NTES…IIEW. [4Fe-4S] cluster-binding residues include Cys68, Cys71, Cys74, Cys78, Cys123, Cys126, Cys131, Cys135, Cys156, Cys159, Cys162, Cys166, Cys183, Cys186, Cys189, and Cys193.

This is an uncharacterized protein from Escherichia coli O157:H7.